Reading from the N-terminus, the 237-residue chain is Uridylate kinase (237 aa).

10–13 lines the ATP pocket; that stretch reads KLSG. Residue G51 participates in UMP binding. Residues G52 and R56 each coordinate ATP. Residues D71 and 133–140 each bind UMP; that span reads TGNPCFTT. T160, Y166, and D169 together coordinate ATP.

This sequence belongs to the UMP kinase family. In terms of assembly, homohexamer.

It is found in the cytoplasm. It catalyses the reaction UMP + ATP = UDP + ADP. It participates in pyrimidine metabolism; CTP biosynthesis via de novo pathway; UDP from UMP (UMPK route): step 1/1. Inhibited by UTP. Functionally, catalyzes the reversible phosphorylation of UMP to UDP. This Vesicomyosocius okutanii subsp. Calyptogena okutanii (strain HA) protein is Uridylate kinase.